Reading from the N-terminus, the 133-residue chain is Small ribosomal subunit protein uS19 (133 aa).

It belongs to the universal ribosomal protein uS19 family.

Functionally, protein S19 forms a complex with S13 that binds strongly to the 16S ribosomal RNA. The polypeptide is Small ribosomal subunit protein uS19 (Thermococcus sibiricus (strain DSM 12597 / MM 739)).